The chain runs to 213 residues: Protein FAM177A1 (213 aa).

M1 bears the N-acetylmethionine mark. S70 bears the Phosphoserine mark. T71 carries the post-translational modification Phosphothreonine. Residues I136–I173 are a coiled coil. The interval E147–Q175 is disordered. Polar residues predominate over residues Q162–Q175.

This sequence belongs to the FAM177 family.

The sequence is that of Protein FAM177A1 (FAM177A1) from Homo sapiens (Human).